The chain runs to 235 residues: Carboxy-S-adenosyl-L-methionine synthase (235 aa).

S-adenosyl-L-methionine contacts are provided by residues Y35, 60-62 (GCS), 83-84 (DN), N124, and R191.

This sequence belongs to the class I-like SAM-binding methyltransferase superfamily. Cx-SAM synthase family. Homodimer.

The catalysed reaction is prephenate + S-adenosyl-L-methionine = carboxy-S-adenosyl-L-methionine + 3-phenylpyruvate + H2O. In terms of biological role, catalyzes the conversion of S-adenosyl-L-methionine (SAM) to carboxy-S-adenosyl-L-methionine (Cx-SAM). This Campylobacter jejuni subsp. jejuni serotype O:6 (strain 81116 / NCTC 11828) protein is Carboxy-S-adenosyl-L-methionine synthase.